The primary structure comprises 91 residues: Small ribosomal subunit protein uS15 (91 aa).

This sequence belongs to the universal ribosomal protein uS15 family. Part of the 30S ribosomal subunit. Forms a bridge to the 50S subunit in the 70S ribosome, contacting the 23S rRNA.

In terms of biological role, one of the primary rRNA binding proteins, it binds directly to 16S rRNA where it helps nucleate assembly of the platform of the 30S subunit by binding and bridging several RNA helices of the 16S rRNA. Forms an intersubunit bridge (bridge B4) with the 23S rRNA of the 50S subunit in the ribosome. This is Small ribosomal subunit protein uS15 from Rickettsia prowazekii (strain Madrid E).